Reading from the N-terminus, the 536-residue chain is Cytochrome c oxidase subunit 1 (536 aa).

The helical transmembrane segment at 19–39 (IGMTYLGFGMLSAMMGTGMSV) threads the bilayer. Residue E44 participates in Ca(2+) binding. Residue H67 participates in Fe(II)-heme a binding. 6 helical membrane-spanning segments follow: residues 69–89 (LLMMFFFIMPVWMGAFGNFFL), 103–123 (LNNISFWCLPPALVCMVCSVL), 152–172 (AMFAMHLTSMSSLLGAMNFMV), 188–208 (PLFAWAMFLTAMLLLLSLPVL), 240–260 (LFWFFGHPEVYILMMPGFGVM), and 273–293 (FGEMGMLYAMGSIGFLGFLVW). H246 is a binding site for Cu cation. Positions 246-250 (HPEVY) form a cross-link, 1'-histidyl-3'-tyrosine (His-Tyr). Y250 contacts O2. Cu cation-binding residues include H295 and H296. A run of 2 helical transmembrane segments spans residues 315-335 (MVIAVPTGIKIFSWLATIYGG) and 341-361 (VPMLFALGFLFLFTMGGLTGV). Positions 373 and 374 each coordinate Mg(2+). Residue H381 coordinates heme a3. H383 is a binding site for Fe(II)-heme a. The next 2 helical transmembrane spans lie at 388-408 (MGALFSLMGAYYYWGPAMFGL) and 418-438 (HFWLLFMSVNVMFLPMHFLGL). P446 contributes to the Ca(2+) binding site. A helical membrane pass occupies residues 461–481 (MGSAMSVMSVLVGLKSVLVQL).

This sequence belongs to the heme-copper respiratory oxidase family. As to quaternary structure, component of the cytochrome c oxidase (complex IV, CIV), a multisubunit enzyme composed of a catalytic core of 3 subunits and several supernumerary subunits. The complex exists as a monomer or a dimer and forms supercomplexes (SCs) in the inner mitochondrial membrane with ubiquinol-cytochrome c oxidoreductase (cytochrome b-c1 complex, complex III, CIII). Heme serves as cofactor. The cofactor is Cu cation.

The protein resides in the mitochondrion inner membrane. The catalysed reaction is 4 Fe(II)-[cytochrome c] + O2 + 8 H(+)(in) = 4 Fe(III)-[cytochrome c] + 2 H2O + 4 H(+)(out). It participates in energy metabolism; oxidative phosphorylation. Its function is as follows. Component of the cytochrome c oxidase, the last enzyme in the mitochondrial electron transport chain which drives oxidative phosphorylation. The respiratory chain contains 3 multisubunit complexes succinate dehydrogenase (complex II, CII), ubiquinol-cytochrome c oxidoreductase (cytochrome b-c1 complex, complex III, CIII) and cytochrome c oxidase (complex IV, CIV), that cooperate to transfer electrons derived from NADH and succinate to molecular oxygen, creating an electrochemical gradient over the inner membrane that drives transmembrane transport and the ATP synthase. Cytochrome c oxidase is the component of the respiratory chain that catalyzes the reduction of oxygen to water. Electrons originating from reduced cytochrome c in the intermembrane space (IMS) are transferred via the dinuclear copper A center (CU(A)) of subunit 2 and heme A of subunit 1 to the active site in subunit 1, a binuclear center (BNC) formed by heme A3 and copper B (CU(B)). The BNC reduces molecular oxygen to 2 water molecules using 4 electrons from cytochrome c in the IMS and 4 protons from the mitochondrial matrix. The sequence is that of Cytochrome c oxidase subunit 1 (COX1) from Debaryomyces hansenii (strain ATCC 36239 / CBS 767 / BCRC 21394 / JCM 1990 / NBRC 0083 / IGC 2968) (Yeast).